We begin with the raw amino-acid sequence, 159 residues long: NADH-quinone oxidoreductase subunit I (159 aa).

2 consecutive 4Fe-4S ferredoxin-type domains span residues 51–80 (RRYE…IEAD) and 90–119 (TRYD…EGPN). Residues C60, C63, C66, C70, C99, C102, C105, and C109 each coordinate [4Fe-4S] cluster.

It belongs to the complex I 23 kDa subunit family. As to quaternary structure, NDH-1 is composed of 14 different subunits. Subunits NuoA, H, J, K, L, M, N constitute the membrane sector of the complex. The cofactor is [4Fe-4S] cluster.

It localises to the cell inner membrane. It carries out the reaction a quinone + NADH + 5 H(+)(in) = a quinol + NAD(+) + 4 H(+)(out). NDH-1 shuttles electrons from NADH, via FMN and iron-sulfur (Fe-S) centers, to quinones in the respiratory chain. The immediate electron acceptor for the enzyme in this species is believed to be ubiquinone. Couples the redox reaction to proton translocation (for every two electrons transferred, four hydrogen ions are translocated across the cytoplasmic membrane), and thus conserves the redox energy in a proton gradient. This is NADH-quinone oxidoreductase subunit I from Rickettsia felis (strain ATCC VR-1525 / URRWXCal2) (Rickettsia azadi).